The sequence spans 242 residues: Biosynthetic peptidoglycan transglycosylase (242 aa).

A helical transmembrane segment spans residues 19 to 39; sequence LMVVLAVFWGGGIALFSVAPV.

This sequence belongs to the glycosyltransferase 51 family.

The protein localises to the cell inner membrane. The catalysed reaction is [GlcNAc-(1-&gt;4)-Mur2Ac(oyl-L-Ala-gamma-D-Glu-L-Lys-D-Ala-D-Ala)](n)-di-trans,octa-cis-undecaprenyl diphosphate + beta-D-GlcNAc-(1-&gt;4)-Mur2Ac(oyl-L-Ala-gamma-D-Glu-L-Lys-D-Ala-D-Ala)-di-trans,octa-cis-undecaprenyl diphosphate = [GlcNAc-(1-&gt;4)-Mur2Ac(oyl-L-Ala-gamma-D-Glu-L-Lys-D-Ala-D-Ala)](n+1)-di-trans,octa-cis-undecaprenyl diphosphate + di-trans,octa-cis-undecaprenyl diphosphate + H(+). Its pathway is cell wall biogenesis; peptidoglycan biosynthesis. In terms of biological role, peptidoglycan polymerase that catalyzes glycan chain elongation from lipid-linked precursors. In Shigella dysenteriae serotype 1 (strain Sd197), this protein is Biosynthetic peptidoglycan transglycosylase.